The chain runs to 780 residues: ATP-dependent 6-phosphofructokinase, liver type (780 aa).

A2 is modified (N-acetylalanine). The segment at 2-390 is N-terminal catalytic PFK domain 1; sequence AAVDLEKLRA…NWNIYKLLAH (389 aa). ATP contacts are provided by residues G25, 88–89, and 118–121; these read RC and GDGS. D119 is a binding site for Mg(2+). Substrate contacts are provided by residues 164–166, R201, 208–210, E264, R292, and 298–301; these read SID, MGR, and HVQR. The active-site Proton acceptor is D166. S377 is subject to Phosphoserine. Residues 391 to 400 are interdomain linker; that stretch reads QKPPKEKSNF. Residues 401-780 form a C-terminal regulatory PFK domain 2 region; that stretch reads SLAILNVGAP…RRTLSMDKGF (380 aa). Beta-D-fructose 2,6-bisphosphate contacts are provided by residues R470, 527 to 531, R565, 572 to 574, and E628; these read TISNN and MGG. O-linked (GlcNAc) serine glycosylation is present at S529. Residue Y640 is modified to Phosphotyrosine. Residues R654, 660–663, and R734 contribute to the beta-D-fructose 2,6-bisphosphate site; that span reads HLQQ. S775 carries the post-translational modification Phosphoserine.

This sequence belongs to the phosphofructokinase type A (PFKA) family. ATP-dependent PFK group I subfamily. Eukaryotic two domain clade 'E' sub-subfamily. Homo- and heterotetramers. Phosphofructokinase (PFK) enzyme functions as a tetramer composed of different combinations of 3 types of subunits, called PFKM (where M stands for Muscle), PFKL (Liver) and PFKP (Platelet). The composition of the PFK tetramer differs according to the tissue type it is present in. In muscles, it is composed of 4 PFKM subunits (also called M4). In the liver, the predominant form is a tetramer of PFKL subunits (L4). In erythrocytes, both PFKM and PFKL subunits randomly tetramerize to form M4, L4 and other combinations (ML3, M2L2, M3L). The kinetic and regulatory properties of the tetrameric enzyme are dependent on the subunit composition, hence can vary across tissues. Mg(2+) is required as a cofactor. In terms of processing, glcNAcylation at Ser-529 by OGT decreases enzyme activity, leading to redirect glucose flux through the oxidative pentose phosphate pathway. Glycosylation is stimulated by both hypoxia and glucose deprivation.

The protein localises to the cytoplasm. It catalyses the reaction beta-D-fructose 6-phosphate + ATP = beta-D-fructose 1,6-bisphosphate + ADP + H(+). The protein operates within carbohydrate degradation; glycolysis; D-glyceraldehyde 3-phosphate and glycerone phosphate from D-glucose: step 3/4. Its activity is regulated as follows. Allosterically activated by ADP, AMP, or fructose 2,6-bisphosphate, and allosterically inhibited by ATP or citrate. GlcNAcylation by OGT overcomes allosteric regulation. Catalyzes the phosphorylation of D-fructose 6-phosphate to fructose 1,6-bisphosphate by ATP, the first committing step of glycolysis. Negatively regulates the phagocyte oxidative burst in response to bacterial infection by controlling cellular NADPH biosynthesis and NADPH oxidase-derived reactive oxygen species. Upon macrophage activation, drives the metabolic switch toward glycolysis, thus preventing glucose turnover that produces NADPH via pentose phosphate pathway. The polypeptide is ATP-dependent 6-phosphofructokinase, liver type (Homo sapiens (Human)).